Reading from the N-terminus, the 129-residue chain is Serum amyloid A-2 protein (129 aa).

A signal peptide spans 1–18 (MKLFTGLIFCSLVLGVSS). Glutamine 19 is subject to Pyrrolidone carboxylic acid. Residues 92–129 (GDSGHGVEDSKADQAANEWGRSGKDPNHFRPSGLPDKY) form a disordered region.

It belongs to the SAA family. In terms of assembly, apolipoprotein of the HDL complex. Expressed by the liver; secreted in plasma.

Its subcellular location is the secreted. In terms of biological role, major acute phase reactant. In Neovison vison (American mink), this protein is Serum amyloid A-2 protein (SAA2P0DJI9).